We begin with the raw amino-acid sequence, 565 residues long: Probable transcription factor lepB (565 aa).

The interval 52 to 259 (KRYAEDVTYL…PRNLDDRDLD (208 aa)) is fungal specific transcription factor domain.

It is found in the nucleus. Its function is as follows. Probable transcription factor; part of the gene cluster 23 that mediates the biosynthesis of a family of 2-pyridones known as leporins. The polypeptide is Probable transcription factor lepB (Aspergillus flavus (strain ATCC 200026 / FGSC A1120 / IAM 13836 / NRRL 3357 / JCM 12722 / SRRC 167)).